We begin with the raw amino-acid sequence, 345 residues long: Homeobox protein DBX1 (345 aa).

Disordered stretches follow at residues 55 to 103 (PRGS…VSPA) and 241 to 345 (KERE…ITVS). The homeobox DNA-binding region spans 182 to 241 (GMLRRAVFSDVQRKALEKMFQKQKYISKPDRKKLAAKLGLKDSQVKIWFQNRRMKWRNSK). Over residues 300–309 (DPRHLRDPRL) the composition is skewed to basic and acidic residues. Acidic residues predominate over residues 330-345 (SDSEDDEEGEEEITVS).

Belongs to the H2.0 homeobox family.

The protein localises to the nucleus. Could have a role in patterning the central nervous system during embryogenesis. Has a key role in regulating the distinct phenotypic features that distinguish two major classes of ventral interneurons, V0 and V1 neurons. Regulates the transcription factor profile, neurotransmitter phenotype, intraspinal migratory path and axonal trajectory of V0 neurons, features that differentiate them from an adjacent set of V1 neurons. This is Homeobox protein DBX1 (DBX1) from Bos taurus (Bovine).